Reading from the N-terminus, the 313-residue chain is PDCD10 and GCKIII kinases-associated protein 1 (313 aa).

The interval 42 to 95 (KGTQNSEVEVPGSTLHSGSLSKPDSSGSTTGLPCQGSLTQEDSEERPCVEKHGI) is disordered. The span at 58-69 (SGSLSKPDSSGS) shows a compositional bias: low complexity. Phosphoserine is present on Ser-60. Over residues 70-81 (TTGLPCQGSLTQ) the composition is skewed to polar residues. Thr-104 is modified (phosphothreonine). Phosphoserine is present on residues Ser-107, Ser-237, and Ser-240. Residues 253–288 (YFKEEDPTQPTPVADPGNEREDPHTYNGNKEGAVVD) are disordered.

Interacts with KEAP1; this interaction prevents the ubiquitination of KEAP1 by TRIM25, thus protecting KEAP1 from degradation. Found in association with PDCD10 and members of the STE20 kinases, such as STK24, STK25, and STK26.

It localises to the cell membrane. In terms of biological role, acts as a tumor suppressor. Acts as a tumor suppressor for colorectal cancer cell proliferation by targeting KEAP1/USP17/ELK1/CDK6 axis. The protein is PDCD10 and GCKIII kinases-associated protein 1 of Rattus norvegicus (Rat).